Here is a 333-residue protein sequence, read N- to C-terminus: Glycerol-3-phosphate dehydrogenase [NAD(P)+] (333 aa).

Positions 10, 11, and 105 each coordinate NADPH. K105, G136, and T138 together coordinate sn-glycerol 3-phosphate. A140 serves as a coordination point for NADPH. Positions 191, 244, 254, 255, and 256 each coordinate sn-glycerol 3-phosphate. Residue K191 is the Proton acceptor of the active site. Residue R255 participates in NADPH binding. V279 and E281 together coordinate NADPH.

Belongs to the NAD-dependent glycerol-3-phosphate dehydrogenase family.

The protein resides in the cytoplasm. It carries out the reaction sn-glycerol 3-phosphate + NAD(+) = dihydroxyacetone phosphate + NADH + H(+). The catalysed reaction is sn-glycerol 3-phosphate + NADP(+) = dihydroxyacetone phosphate + NADPH + H(+). It participates in membrane lipid metabolism; glycerophospholipid metabolism. In terms of biological role, catalyzes the reduction of the glycolytic intermediate dihydroxyacetone phosphate (DHAP) to sn-glycerol 3-phosphate (G3P), the key precursor for phospholipid synthesis. This chain is Glycerol-3-phosphate dehydrogenase [NAD(P)+], found in Syntrophotalea carbinolica (strain DSM 2380 / NBRC 103641 / GraBd1) (Pelobacter carbinolicus).